The following is a 273-amino-acid chain: HMP-PP phosphatase (273 aa).

D8 functions as the Nucleophile in the catalytic mechanism. Mg(2+) contacts are provided by D8, D10, and D212.

This sequence belongs to the HAD-like hydrolase superfamily. Cof family. The cofactor is Mg(2+).

It carries out the reaction 4-amino-2-methyl-5-(diphosphooxymethyl)pyrimidine + H2O = 4-amino-2-methyl-5-(phosphooxymethyl)pyrimidine + phosphate + H(+). Functionally, catalyzes the hydrolysis of 4-amino-2-methyl-5-hydroxymethylpyrimidine pyrophosphate (HMP-PP) to 4-amino-2-methyl-5-hydroxymethylpyrimidine phosphate (HMP-P). The chain is HMP-PP phosphatase from Yersinia pseudotuberculosis serotype IB (strain PB1/+).